We begin with the raw amino-acid sequence, 209 residues long: Small ribosomal subunit protein uS4 (209 aa).

One can recognise an S4 RNA-binding domain in the interval 98 to 161; sequence ARLDNVVYRM…RDLEVIKKAV (64 aa).

Belongs to the universal ribosomal protein uS4 family. As to quaternary structure, part of the 30S ribosomal subunit. Contacts protein S5. The interaction surface between S4 and S5 is involved in control of translational fidelity.

In terms of biological role, one of the primary rRNA binding proteins, it binds directly to 16S rRNA where it nucleates assembly of the body of the 30S subunit. Functionally, with S5 and S12 plays an important role in translational accuracy. This chain is Small ribosomal subunit protein uS4, found in Thermotoga petrophila (strain ATCC BAA-488 / DSM 13995 / JCM 10881 / RKU-1).